The primary structure comprises 194 residues: Molybdenum cofactor guanylyltransferase (194 aa).

Residues 12 to 14 (LAG), Lys25, Asn53, Asp71, and Asp101 each bind GTP. Asp101 is a binding site for Mg(2+).

Belongs to the MobA family. As to quaternary structure, monomer. The cofactor is Mg(2+).

Its subcellular location is the cytoplasm. The enzyme catalyses Mo-molybdopterin + GTP + H(+) = Mo-molybdopterin guanine dinucleotide + diphosphate. In terms of biological role, transfers a GMP moiety from GTP to Mo-molybdopterin (Mo-MPT) cofactor (Moco or molybdenum cofactor) to form Mo-molybdopterin guanine dinucleotide (Mo-MGD) cofactor. This chain is Molybdenum cofactor guanylyltransferase, found in Escherichia coli O157:H7.